A 368-amino-acid polypeptide reads, in one-letter code: 1-aminocyclopropane-1-carboxylate synthase (368 aa).

Lys230 bears the N6-(pyridoxal phosphate)lysine mark.

Belongs to the class-I pyridoxal-phosphate-dependent aminotransferase family. Homodimer. The cofactor is pyridoxal 5'-phosphate.

It carries out the reaction S-adenosyl-L-methionine = 1-aminocyclopropane-1-carboxylate + S-methyl-5'-thioadenosine + H(+). Its pathway is alkene biosynthesis; ethylene biosynthesis via S-adenosyl-L-methionine; ethylene from S-adenosyl-L-methionine: step 1/2. Catalyzes the formation of 1-aminocyclopropane-1-carboxylate, a direct precursor of ethylene in higher plants. The protein is 1-aminocyclopropane-1-carboxylate synthase (ACS5) of Vigna radiata var. radiata (Mung bean).